The sequence spans 202 residues: Large ribosomal subunit protein uL5 (202 aa).

Positions 1–17 (MSAKAATKNATKVAVKA) are enriched in low complexity. The tract at residues 1–30 (MSAKAATKNATKVAVKAPEATTPVETKKSK) is disordered.

The protein belongs to the universal ribosomal protein uL5 family. As to quaternary structure, component of the large ribosomal subunit.

It localises to the nucleus. Its subcellular location is the cytoplasm. Its function is as follows. Component of the ribosome, a large ribonucleoprotein complex responsible for the synthesis of proteins in the cell. The small ribosomal subunit (SSU) binds messenger RNAs (mRNAs) and translates the encoded message by selecting cognate aminoacyl-transfer RNA (tRNA) molecules. The large subunit (LSU) contains the ribosomal catalytic site termed the peptidyl transferase center (PTC), which catalyzes the formation of peptide bonds, thereby polymerizing the amino acids delivered by tRNAs into a polypeptide chain. The nascent polypeptides leave the ribosome through a tunnel in the LSU and interact with protein factors that function in enzymatic processing, targeting, and the membrane insertion of nascent chains at the exit of the ribosomal tunnel. The sequence is that of Large ribosomal subunit protein uL5 (rpl11) from Dictyostelium discoideum (Social amoeba).